Consider the following 184-residue polypeptide: Large ribosomal subunit protein uL6 (184 aa).

This sequence belongs to the universal ribosomal protein uL6 family. As to quaternary structure, part of the 50S ribosomal subunit.

Its function is as follows. This protein binds to the 23S rRNA, and is important in its secondary structure. It is located near the subunit interface in the base of the L7/L12 stalk, and near the tRNA binding site of the peptidyltransferase center. The sequence is that of Large ribosomal subunit protein uL6 from Desulfurococcus amylolyticus (strain DSM 18924 / JCM 16383 / VKM B-2413 / 1221n) (Desulfurococcus kamchatkensis).